A 576-amino-acid chain; its full sequence is Nuclear protein localization protein 4 homolog (576 aa).

2 disordered regions span residues 67–96 and 200–219; these read LHLV…NNIS and QDDN…IKKS. Positions 72–94 are enriched in low complexity; the sequence is NNNNNNNDNKASSGSNNNNNNNN. The span at 208–218 shows a compositional bias: basic and acidic residues; sequence KDNKDNSEIKK. Residues 295 to 430 form the MPN domain; sequence GALVDFQSAN…MEAFQVSDQA (136 aa).

It belongs to the NPL4 family.

It participates in protein degradation; proteasomal ubiquitin-dependent pathway. In terms of biological role, may be part of a complex that binds ubiquitinated proteins and that is necessary for the export of misfolded proteins from the ER to the cytoplasm, where they are degraded by the proteasome. The sequence is that of Nuclear protein localization protein 4 homolog (nploc4) from Dictyostelium discoideum (Social amoeba).